Reading from the N-terminus, the 449-residue chain is Ribosomal protein uS12 methylthiotransferase RimO (449 aa).

Positions 16–126 constitute an MTTase N-terminal domain; sequence PKISFVSLGC…VMEAVHAAIA (111 aa). [4Fe-4S] cluster contacts are provided by C25, C61, C90, C157, C161, and C164. The 239-residue stretch at 143-381 folds into the Radical SAM core domain; it reads LTPRHYAYLK…MEHQQKISAR (239 aa). The TRAM domain occupies 384-449; the sequence is REKIGKHVSV…DAYDLHGKAV (66 aa).

This sequence belongs to the methylthiotransferase family. RimO subfamily. It depends on [4Fe-4S] cluster as a cofactor.

It localises to the cytoplasm. It carries out the reaction L-aspartate(89)-[ribosomal protein uS12]-hydrogen + (sulfur carrier)-SH + AH2 + 2 S-adenosyl-L-methionine = 3-methylsulfanyl-L-aspartate(89)-[ribosomal protein uS12]-hydrogen + (sulfur carrier)-H + 5'-deoxyadenosine + L-methionine + A + S-adenosyl-L-homocysteine + 2 H(+). Its function is as follows. Catalyzes the methylthiolation of an aspartic acid residue of ribosomal protein uS12. This Beijerinckia indica subsp. indica (strain ATCC 9039 / DSM 1715 / NCIMB 8712) protein is Ribosomal protein uS12 methylthiotransferase RimO.